The chain runs to 663 residues: Rap1 GTPase-activating protein 1 (663 aa).

Positions 1–17 constitute a GoLoco domain; it reads MIEKMQGSRMDEQRCSF. A disordered region spans residues 1-23; sequence MIEKMQGSRMDEQRCSFPPPLKT. A Phosphoserine modification is found at F17. The Rap-GAP domain occupies 181–397; sequence IVTFDEHVIS…RTRAALLETL (217 aa). S441 bears the Phosphoserine mark. 2 disordered regions span residues 442-604 and 616-645; these read MDAM…PHKR and SVST…PACP. Positions 450–465 are enriched in polar residues; sequence KKPNTVSTSHSGSFAP. 5 positions are modified to phosphoserine: S484, S499, S515, S541, and S542. The span at 535–549 shows a compositional bias: polar residues; that stretch reads ENSSTQSSPEMPTTK. Positions 567–579 are enriched in low complexity; the sequence is RSSSSASSFASVV. Residues 580-591 are compositionally biased toward acidic residues; the sequence is EETEGVDGEDTG. Residues 616–630 show a composition bias toward low complexity; the sequence is SVSTTSGGSSPGPSR.

Homodimer and heterodimer with RAP1B. As to expression, significant expression seen in the brain, kidney and pancreas. Abundant in the cerebral cortex and expressed at much lower levels in the spinal cord. Not detected in the lymphoid tissues.

Its subcellular location is the golgi apparatus membrane. Functionally, GTPase activator for the nuclear Ras-related regulatory protein RAP-1A (KREV-1), converting it to the putatively inactive GDP-bound state. The protein is Rap1 GTPase-activating protein 1 (RAP1GAP) of Homo sapiens (Human).